The primary structure comprises 250 residues: NAD-dependent protein deacetylase 2 (250 aa).

A Deacetylase sirtuin-type domain is found at 4–250 (MDSKNLFKKA…LRNIWNLIKS (247 aa)). The NAD(+) site is built by Ala29, Thr33, Phe40, Arg41, Gln107, Ile109, Asp110, and His125. Phe40 lines the nicotinamide pocket. Nicotinamide is bound by residues Ile109 and Asp110. His125 acts as the Proton acceptor in catalysis. Positions 133, 136, 158, and 161 each coordinate Zn(2+). 3 residues coordinate NAD(+): Ser198, Ser199, and Asn219.

The protein belongs to the sirtuin family. Class U subfamily. Requires Zn(2+) as cofactor.

It is found in the cytoplasm. The enzyme catalyses N(6)-acetyl-L-lysyl-[protein] + NAD(+) + H2O = 2''-O-acetyl-ADP-D-ribose + nicotinamide + L-lysyl-[protein]. In terms of biological role, NAD-dependent protein deacetylase which modulates the activities of several enzymes which are inactive in their acetylated form. The chain is NAD-dependent protein deacetylase 2 from Caldanaerobacter subterraneus subsp. tengcongensis (strain DSM 15242 / JCM 11007 / NBRC 100824 / MB4) (Thermoanaerobacter tengcongensis).